Here is a 308-residue protein sequence, read N- to C-terminus: Glutaminase 2 (308 aa).

Residues Ser66, Asn117, Glu161, Asn168, Tyr192, Tyr244, and Val262 each coordinate substrate.

Belongs to the glutaminase family. Homotetramer.

It catalyses the reaction L-glutamine + H2O = L-glutamate + NH4(+). This chain is Glutaminase 2, found in Escherichia coli O157:H7.